An 86-amino-acid chain; its full sequence is Small ribosomal subunit protein uS17 (86 aa).

It belongs to the universal ribosomal protein uS17 family. As to quaternary structure, part of the 30S ribosomal subunit.

One of the primary rRNA binding proteins, it binds specifically to the 5'-end of 16S ribosomal RNA. The polypeptide is Small ribosomal subunit protein uS17 (Halalkalibacterium halodurans (strain ATCC BAA-125 / DSM 18197 / FERM 7344 / JCM 9153 / C-125) (Bacillus halodurans)).